Reading from the N-terminus, the 191-residue chain is Oleosin 20.3 kDa (191 aa).

N-acetylalanine is present on A2. Positions 2–54 are polar; sequence ANVDRDRRVHVDRTDKRVHQPNYEDDVGFGGYGGYGAGSDYKSRGPSTNQILA. The next 2 membrane-spanning stretches (helical) occupy residues 52–72 and 99–119; these read ILAL…AGLT and LTIG…LTGL. The segment at 55–128 is hydrophobic; sequence LIAGVPIGGT…LSSVSWVLNY (74 aa).

Belongs to the oleosin family.

The protein localises to the lipid droplet. The protein resides in the membrane. May have a structural role to stabilize the lipid body during desiccation of the seed by preventing coalescence of the oil. Probably interacts with both lipid and phospholipid moieties of lipid bodies. May also provide recognition signals for specific lipase anchorage in lipolysis during seedling growth. In Arabidopsis thaliana (Mouse-ear cress), this protein is Oleosin 20.3 kDa (OL2).